The sequence spans 364 residues: Putative glutamate--cysteine ligase 2-2 (364 aa).

It belongs to the glutamate--cysteine ligase type 2 family. YbdK subfamily.

It carries out the reaction L-cysteine + L-glutamate + ATP = gamma-L-glutamyl-L-cysteine + ADP + phosphate + H(+). ATP-dependent carboxylate-amine ligase which exhibits weak glutamate--cysteine ligase activity. The chain is Putative glutamate--cysteine ligase 2-2 from Mycobacterium sp. (strain JLS).